Consider the following 20-residue polypeptide: 44 kDa cell wall protein 2 (20 aa).

The protein resides in the secreted. Its subcellular location is the cell wall. The sequence is that of 44 kDa cell wall protein 2 from Solanum lycopersicum (Tomato).